We begin with the raw amino-acid sequence, 396 residues long: MSDYHHGVQVLEINEGTRVISTVSTAIVGMVCTASDADAETFPLNKPVLITNVQSAISKAGKKGTLAASLQAIADQSKPVTVVMRVEDGTGDDEETKLAQTVSNIIGTTDENGQYTGLKAMLAAESVTGVKPRILGVPGLDTKEVAVALASVCQKLRAFGYISAWGCKTISEVKAYRQNFSQRELMVIWPDFLAWDTVTSTTATAYATARALGLRAKIDQEQGWHKTLSNVGVNGVTGISASVFWDLQESGTDADLLNESGVTTLIRRDGFRFWGNRTCSDDPLFLFENYTRTAQVVADTMAEAHMWAVDKPITATLIRDIVDGINAKFRELKTNGYIVDATCWFSEESNDAETLKAGKLYIDYDYTPVPPLENLTLRQRITDKYLANLVTSVNSN.

Belongs to the myoviridae tail sheath protein family. Homomultimer.

Its subcellular location is the virion. It is found in the host cytoplasm. Functionally, polymerizes as an extended helical structure around the baseplate-tail tube complex. During ejection, the sheath shifts to a contracted form, thereby making the inner tail tube protrude through the host cell envelope. The polypeptide is Tail sheath protein (FI) (Enterobacteriaceae (Bacteriophage P2)).